The sequence spans 247 residues: Chaperone protein AfaB (247 aa).

The first 29 residues, 1–29 (MKMRAVAVFTGMLTGVLSVAGLLSAGAYA), serve as a signal peptide directing secretion.

It belongs to the periplasmic pilus chaperone family.

It localises to the periplasm. Its function is as follows. Involved in the biogenesis of the AFA-III afimbrial adhesin. The sequence is that of Chaperone protein AfaB (afaB) from Escherichia coli.